The chain runs to 441 residues: Serine hydroxymethyltransferase (441 aa).

Residues leucine 119 and 123-125 (GHL) each bind (6S)-5,6,7,8-tetrahydrofolate. An N6-(pyridoxal phosphate)lysine modification is found at lysine 228. A (6S)-5,6,7,8-tetrahydrofolate-binding site is contributed by 370–372 (SPF).

This sequence belongs to the SHMT family. Homodimer. Pyridoxal 5'-phosphate is required as a cofactor.

It is found in the cytoplasm. The catalysed reaction is (6R)-5,10-methylene-5,6,7,8-tetrahydrofolate + glycine + H2O = (6S)-5,6,7,8-tetrahydrofolate + L-serine. It participates in one-carbon metabolism; tetrahydrofolate interconversion. Its pathway is amino-acid biosynthesis; glycine biosynthesis; glycine from L-serine: step 1/1. Functionally, catalyzes the reversible interconversion of serine and glycine with tetrahydrofolate (THF) serving as the one-carbon carrier. This reaction serves as the major source of one-carbon groups required for the biosynthesis of purines, thymidylate, methionine, and other important biomolecules. Also exhibits THF-independent aldolase activity toward beta-hydroxyamino acids, producing glycine and aldehydes, via a retro-aldol mechanism. This Chlorobium phaeovibrioides (strain DSM 265 / 1930) (Prosthecochloris vibrioformis (strain DSM 265)) protein is Serine hydroxymethyltransferase.